A 117-amino-acid polypeptide reads, in one-letter code: Hainantoxin-XV (117 aa).

A signal peptide spans M1–S20. Residues S20–E55 are disordered. Positions S21–R56 are excised as a propeptide. Basic and acidic residues predominate over residues N23 to E55. 4 disulfide bridges follow: C58–C72, C65–C78, C69–C115, and C71–C91.

Belongs to the neurotoxin 03 (Tx2) family. 02 subfamily. HNTX-XV sub-subfamily. In terms of tissue distribution, expressed by the venom gland.

Its subcellular location is the secreted. In terms of biological role, putative ion channel inhibitor. This Cyriopagopus hainanus (Chinese bird spider) protein is Hainantoxin-XV.